The chain runs to 299 residues: 4-diphosphocytidyl-2-C-methyl-D-erythritol kinase (299 aa).

Lys10 is an active-site residue. 96 to 106 (PVAGGMAGGSA) is an ATP binding site. Asp138 is an active-site residue.

The protein belongs to the GHMP kinase family. IspE subfamily.

It carries out the reaction 4-CDP-2-C-methyl-D-erythritol + ATP = 4-CDP-2-C-methyl-D-erythritol 2-phosphate + ADP + H(+). Its pathway is isoprenoid biosynthesis; isopentenyl diphosphate biosynthesis via DXP pathway; isopentenyl diphosphate from 1-deoxy-D-xylulose 5-phosphate: step 3/6. Catalyzes the phosphorylation of the position 2 hydroxy group of 4-diphosphocytidyl-2C-methyl-D-erythritol. The chain is 4-diphosphocytidyl-2-C-methyl-D-erythritol kinase from Streptomyces coelicolor (strain ATCC BAA-471 / A3(2) / M145).